Here is a 476-residue protein sequence, read N- to C-terminus: Cysteine--tRNA ligase (476 aa).

Cys-28 is a binding site for Zn(2+). The short motif at 30–40 (PTVYDNTHLGH) is the 'HIGH' region element. Cys-208, His-233, and Glu-237 together coordinate Zn(2+). The 'KMSKS' region motif lies at 265–269 (KMSKS). Position 268 (Lys-268) interacts with ATP.

It belongs to the class-I aminoacyl-tRNA synthetase family. It depends on Zn(2+) as a cofactor.

The protein resides in the cytoplasm. It carries out the reaction tRNA(Cys) + L-cysteine + ATP = L-cysteinyl-tRNA(Cys) + AMP + diphosphate. This chain is Cysteine--tRNA ligase, found in Methanococcus maripaludis (strain DSM 14266 / JCM 13030 / NBRC 101832 / S2 / LL).